A 395-amino-acid chain; its full sequence is Subtilisin-like protease 9 (395 aa).

The first 20 residues, 1-20 (MGFFRTLFSFSIFALSLADT), serve as a signal peptide directing secretion. Residues 21-120 (SKFIGLDDVD…ADRVVKMAAL (100 aa)) constitute a propeptide that is removed on maturation. The Inhibitor I9 domain maps to 36-117 (SYIVVMKGAV…YVEADRVVKM (82 aa)). A Peptidase S8 domain is found at 128–395 (SWGLGRISHK…RRLLYNGSGA (268 aa)). Catalysis depends on charge relay system residues Asp-160 and His-191. N-linked (GlcNAc...) asparagine glycosylation is present at Asn-252. Ser-341 (charge relay system) is an active-site residue. Residue Asn-391 is glycosylated (N-linked (GlcNAc...) asparagine).

Belongs to the peptidase S8 family.

The protein resides in the secreted. Functionally, secreted subtilisin-like serine protease with keratinolytic activity that contributes to pathogenicity. This chain is Subtilisin-like protease 9 (SUB9), found in Arthroderma otae (strain ATCC MYA-4605 / CBS 113480) (Microsporum canis).